A 282-amino-acid chain; its full sequence is Chlorite dismutase (282 aa).

The signal sequence occupies residues 1–31 (MTNLSIHNFKLSLVAAVIGSAMVMTSSPVAA). Glutamate 104 provides a ligand contact to Ca(2+). Histidine 204 is a heme binding site. The active-site Proton acceptor is arginine 217. The Ca(2+) site is built by aspartate 226 and threonine 265.

Belongs to the chlorite dismutase family. As to quaternary structure, homopentamer. It depends on heme b as a cofactor.

It is found in the periplasm. It catalyses the reaction chloride + O2 = chlorite. Its function is as follows. Catalyzes the heme-dependent decomposition of chlorite to O(2) and chloride with high efficiency and specificity. Used to detoxify chlorite, a by-product of the reduction of perchlorate, a primarily anthropogenic pollutant, in perchlorate-respiring bacteria. This chain is Chlorite dismutase, found in Dechloromonas aromatica (strain RCB).